Here is a 377-residue protein sequence, read N- to C-terminus: Spermidine/putrescine import ATP-binding protein PotA (377 aa).

One can recognise an ABC transporter domain in the interval 18 to 248 (IRLSGISKSF…PKNLFVARFI (231 aa)). Residue 50-57 (GPSGCGKT) participates in ATP binding.

This sequence belongs to the ABC transporter superfamily. Spermidine/putrescine importer (TC 3.A.1.11.1) family. In terms of assembly, the complex is composed of two ATP-binding proteins (PotA), two transmembrane proteins (PotB and PotC) and a solute-binding protein (PotD).

It is found in the cell inner membrane. The catalysed reaction is ATP + H2O + polyamine-[polyamine-binding protein]Side 1 = ADP + phosphate + polyamineSide 2 + [polyamine-binding protein]Side 1.. Functionally, part of the ABC transporter complex PotABCD involved in spermidine/putrescine import. Responsible for energy coupling to the transport system. This Vibrio vulnificus (strain CMCP6) protein is Spermidine/putrescine import ATP-binding protein PotA.